Here is a 1245-residue protein sequence, read N- to C-terminus: ABC transporter B family member 13 (1245 aa).

Residues 1–14 are compositionally biased toward polar residues; the sequence is MDNTERSSNGNIQA. Positions 1-20 are disordered; that stretch reads MDNTERSSNGNIQAETEAKE. Residues 47–336 enclose the ABC transmembrane type-1 1 domain; it reads MLLGGLGACI…AAPSLSAIAK (290 aa). A helical transmembrane segment spans residues 48-68; the sequence is LLGGLGACIHGATLPLFFVFF. The N-linked (GlcNAc...) asparagine glycan is linked to Asn77. Helical transmembrane passes span 94-114, 171-191, 195-215, 276-296, and 314-334; these read LYLV…VSCW, HVLR…LSVW, LLTL…AIVM, LGVG…LWYA, and ILNV…LSAI. Residues Asn351 and Asn391 are each glycosylated (N-linked (GlcNAc...) asparagine). Residues 372 to 607 enclose the ABC transporter 1 domain; that stretch reads IEFQKVSFAY…GGDYATLVNC (236 aa). 406 to 413 is a binding site for ATP; sequence GPSGSGKS. The span at 610–629 shows a compositional bias: polar residues; sequence TEPQENSRSIMSETCKSQAG. The tract at residues 610–660 is disordered; sequence TEPQENSRSIMSETCKSQAGSSSSRRVSSSRRTSSFRVDQEKTKNDDSKKD. Residues 630–646 are compositionally biased toward low complexity; it reads SSSSRRVSSSRRTSSFR. Basic and acidic residues predominate over residues 647-660; sequence VDQEKTKNDDSKKD. Residues 681–969 form the ABC transmembrane type-1 2 domain; it reads ALLGSIGAVL…TLALTPDIVK (289 aa). Helical transmembrane passes span 686–706 and 725–745; these read IGAV…AYVL and AIIF…QHYF. An N-linked (GlcNAc...) asparagine glycan is attached at Asn778. 4 consecutive transmembrane segments (helical) span residues 805-822, 828-848, 913-933, and 947-967; these read IVQN…AFFY, AVVT…QLFL, LSQF…SVLI, and FMVL…TPDI. Positions 1004–1240 constitute an ABC transporter 2 domain; it reads IEFRNVSFVY…PNGFYKQLTS (237 aa). N-linked (GlcNAc...) asparagine glycosylation occurs at Asn1008. 1039 to 1046 is an ATP binding site; the sequence is GPSGSGKS. The N-linked (GlcNAc...) asparagine glycan is linked to Asn1106.

This sequence belongs to the ABC transporter superfamily. ABCB family. Multidrug resistance exporter (TC 3.A.1.201) subfamily.

Its subcellular location is the membrane. This chain is ABC transporter B family member 13 (ABCB13), found in Arabidopsis thaliana (Mouse-ear cress).